Reading from the N-terminus, the 597-residue chain is Probable translation initiation factor IF-2 (597 aa).

Residues 13 to 229 (LRTPIVCVMG…LLGLAQKFLE (217 aa)) enclose the tr-type G domain. The segment at 22–29 (GHVDHGKT) is G1. 22-29 (GHVDHGKT) is a GTP binding site. The interval 47 to 51 (AITQH) is G2. Residues 84–87 (DTPG) form a G3 region. GTP is bound by residues 84–88 (DTPGH) and 138–141 (NKID). The tract at residues 138 to 141 (NKID) is G4. The interval 206 to 208 (SAV) is G5.

It belongs to the TRAFAC class translation factor GTPase superfamily. Classic translation factor GTPase family. IF-2 subfamily.

Its function is as follows. Function in general translation initiation by promoting the binding of the formylmethionine-tRNA to ribosomes. Seems to function along with eIF-2. The sequence is that of Probable translation initiation factor IF-2 from Methanosarcina acetivorans (strain ATCC 35395 / DSM 2834 / JCM 12185 / C2A).